Reading from the N-terminus, the 307-residue chain is 4-hydroxybenzoate octaprenyltransferase (307 aa).

7 consecutive transmembrane segments (helical) span residues 27–47 (AGWLLLLWPTLGALWLAAGGF), 50–70 (WHLLAVFTLGTVLMRSAGCCI), 101–121 (LAVGAVLALAAFALVLTTNAL), 142–162 (CVAMPQAVLGVAFSFGIPMAF), 179–199 (AAVPWWAWGLLIGNLFWVLAY), 239–259 (LLAWGAIGFWQGLGVAFAAGL), and 285–305 (FRLNHWVGFAVFAGIVVDLGW).

This sequence belongs to the UbiA prenyltransferase family. The cofactor is Mg(2+).

The protein localises to the cell inner membrane. The enzyme catalyses all-trans-octaprenyl diphosphate + 4-hydroxybenzoate = 4-hydroxy-3-(all-trans-octaprenyl)benzoate + diphosphate. It functions in the pathway cofactor biosynthesis; ubiquinone biosynthesis. Functionally, catalyzes the prenylation of para-hydroxybenzoate (PHB) with an all-trans polyprenyl group. Mediates the second step in the final reaction sequence of ubiquinone-8 (UQ-8) biosynthesis, which is the condensation of the polyisoprenoid side chain with PHB, generating the first membrane-bound Q intermediate 3-octaprenyl-4-hydroxybenzoate. This Methylibium petroleiphilum (strain ATCC BAA-1232 / LMG 22953 / PM1) protein is 4-hydroxybenzoate octaprenyltransferase.